Consider the following 222-residue polypeptide: Phosphoribosylformylglycinamidine synthase subunit PurQ (222 aa).

The 220-residue stretch at 3–222 (AAVVVFPGSN…RALSGLLTDA (220 aa)) folds into the Glutamine amidotransferase type-1 domain. C86 acts as the Nucleophile in catalysis. Catalysis depends on residues H194 and E196.

As to quaternary structure, part of the FGAM synthase complex composed of 1 PurL, 1 PurQ and 2 PurS subunits.

The protein localises to the cytoplasm. The catalysed reaction is N(2)-formyl-N(1)-(5-phospho-beta-D-ribosyl)glycinamide + L-glutamine + ATP + H2O = 2-formamido-N(1)-(5-O-phospho-beta-D-ribosyl)acetamidine + L-glutamate + ADP + phosphate + H(+). The enzyme catalyses L-glutamine + H2O = L-glutamate + NH4(+). Its pathway is purine metabolism; IMP biosynthesis via de novo pathway; 5-amino-1-(5-phospho-D-ribosyl)imidazole from N(2)-formyl-N(1)-(5-phospho-D-ribosyl)glycinamide: step 1/2. Functionally, part of the phosphoribosylformylglycinamidine synthase complex involved in the purines biosynthetic pathway. Catalyzes the ATP-dependent conversion of formylglycinamide ribonucleotide (FGAR) and glutamine to yield formylglycinamidine ribonucleotide (FGAM) and glutamate. The FGAM synthase complex is composed of three subunits. PurQ produces an ammonia molecule by converting glutamine to glutamate. PurL transfers the ammonia molecule to FGAR to form FGAM in an ATP-dependent manner. PurS interacts with PurQ and PurL and is thought to assist in the transfer of the ammonia molecule from PurQ to PurL. This chain is Phosphoribosylformylglycinamidine synthase subunit PurQ, found in Ruegeria sp. (strain TM1040) (Silicibacter sp.).